Reading from the N-terminus, the 95-residue chain is MNLKPLADRVIVKPAPAEEKTKGGLIIPDTGKEKPQYGEVVAVGTGKVADSGQLLEMQIKVGQKVLYGKYSGTEVSVEGEDYLIMRESDIFAILD.

It belongs to the GroES chaperonin family. In terms of assembly, heptamer of 7 subunits arranged in a ring. Interacts with the chaperonin GroEL.

It localises to the cytoplasm. Its function is as follows. Together with the chaperonin GroEL, plays an essential role in assisting protein folding. The GroEL-GroES system forms a nano-cage that allows encapsulation of the non-native substrate proteins and provides a physical environment optimized to promote and accelerate protein folding. GroES binds to the apical surface of the GroEL ring, thereby capping the opening of the GroEL channel. This is Co-chaperonin GroES from Chlorobium phaeobacteroides (strain DSM 266 / SMG 266 / 2430).